We begin with the raw amino-acid sequence, 215 residues long: Thymidylate kinase (215 aa).

12 to 19 (GLEGAGKT) is an ATP binding site.

Belongs to the thymidylate kinase family.

The catalysed reaction is dTMP + ATP = dTDP + ADP. Its function is as follows. Phosphorylation of dTMP to form dTDP in both de novo and salvage pathways of dTTP synthesis. This chain is Thymidylate kinase, found in Halorhodospira halophila (strain DSM 244 / SL1) (Ectothiorhodospira halophila (strain DSM 244 / SL1)).